The sequence spans 169 residues: Ribosome maturation factor RimM (169 aa).

The PRC barrel domain maps to 94 to 167; it reads ENEFYFHEII…KITIEVMEGL (74 aa).

This sequence belongs to the RimM family. Binds ribosomal protein uS19.

It localises to the cytoplasm. Its function is as follows. An accessory protein needed during the final step in the assembly of 30S ribosomal subunit, possibly for assembly of the head region. Essential for efficient processing of 16S rRNA. May be needed both before and after RbfA during the maturation of 16S rRNA. It has affinity for free ribosomal 30S subunits but not for 70S ribosomes. In Listeria monocytogenes serotype 4b (strain F2365), this protein is Ribosome maturation factor RimM.